The chain runs to 109 residues: Defensin-B5 (109 aa).

The signal sequence occupies residues 1 to 20 (MRGLLPFLFLLSFFLSPIQA). The segment at 21 to 44 (QPEGREEELEETWSEDRDQAPPRV) is disordered. The propeptide occupies 21 to 70 (QPEGREEELEETWSEDRDQAPPRVVEESEVVGAENEAGLAAGRSYPWIIL). A compositionally biased stretch (basic and acidic residues) spans 34 to 44 (SEDRDQAPPRV). 3 disulfide bridges follow: C73–C101, C80–C95, and C85–C102. A propeptide spanning residues 107–109 (AVP) is cleaved from the precursor.

This sequence belongs to the beta-defensin family. In terms of tissue distribution, highly expressed in kidney, and expressed at lower levels in testis.

The protein localises to the secreted. In terms of biological role, has antimicrobial activity. The sequence is that of Defensin-B5 from Ornithorhynchus anatinus (Duckbill platypus).